The chain runs to 3033 residues: Genome polyprotein (3033 aa).

Ser-2 carries the post-translational modification N-acetylserine; by host. The tract at residues 2–23 (STNPKPQRKTKRNTNRRPEDVK) is interaction with STAT1. The interval 2-58 (STNPKPQRKTKRNTNRRPEDVKFPGGGQIVGGVYLLPRRGPRLGVRTTRKTSERSQP) is interaction with EIF2AK2/PKR. Residues 2 to 59 (STNPKPQRKTKRNTNRRPEDVKFPGGGQIVGGVYLLPRRGPRLGVRTTRKTSERSQPR) are interaction with DDX3X. The disordered stretch occupies residues 2-75 (STNPKPQRKT…PKDRRSTGKA (74 aa)). The Cytoplasmic segment spans residues 2–168 (STNPKPQRKT…EDGVNYATGN (167 aa)). Short sequence motifs (nuclear localization signal) lie at residues 5-13 (PKPQRKTKR) and 38-43 (PRRGPR). The span at 7–16 (PQRKTKRNTN) shows a compositional bias: basic residues. Positions 32–47 (GGVYLLPRRGPRLGVR) are enriched in low complexity. A Phosphoserine; by host modification is found at Ser-53. 2 consecutive short sequence motifs (nuclear localization signal) follow at residues 58-64 (PRGRRQP) and 66-71 (PKDRRS). Ser-99 bears the Phosphoserine; by host mark. The tract at residues 112–152 (PRHRSRNVGKVIDTLTCGFADLMGYIPVVGAPLSGAARAVA) is important for endoplasmic reticulum and mitochondrial localization. Residue Ser-116 is modified to Phosphoserine; by host PKA. Residues 122-173 (VIDTLTCGFADLMGYIPVVGAPLSGAARAVAHGVRVLEDGVNYATGNLPGFP) are interaction with APOA2. Positions 164-167 (YATG) are important for lipid droplets localization. Residues 169–189 (LPGFPFSIFLLALLSCITVPV) form a helical membrane-spanning segment. Positions 178–191 (LLALLSCITVPVSA) are cleaved as a propeptide — ER anchor for the core protein, removed in mature form by host signal peptidase. Topologically, residues 190–358 (SAAQVKNTSS…SGAHWGVMFG (169 aa)) are lumenal. N-linked (GlcNAc...) asparagine; by host glycosylation is found at Asn-196, Asn-209, and Asn-234. The segment at 265 to 296 (VVMSATFCSALYVGDLCGGVMLAAQVFIVSPQ) is important for fusion. Residue Asn-305 is glycosylated (N-linked (GlcNAc...) asparagine; by host). The chain crosses the membrane as a helical span at residues 359–379 (LAYFSMQGAWAKVIVILLLAA). Residues 380-729 (GVDAGTTTVG…WEWVVLLFLL (350 aa)) lie on the Lumenal side of the membrane. The segment at 385-411 (TTTVGGAVARSTNVIAGVFSHGPQQNI) is HVR1. N-linked (GlcNAc...) (high mannose) asparagine; by host glycans are attached at residues Asn-417, Asn-423, Asn-430, and Asn-448. 4 disulfide bridges follow: Cys-429-Cys-554, Cys-452-Cys-459, Cys-488-Cys-496, and Cys-505-Cys-510. Residue Asn-477 is glycosylated (N-linked (GlcNAc...) (high mannose) asparagine; by host). A CD81-binding 1 region spans residues 484–496 (MRPYCWHYPPKPC). Residues 524-555 (RGVPTYTWGENETDVFLLNSTRPPQGSWFGCT) are CD81-binding 2. N-linked (GlcNAc...) (high mannose) asparagine; by host glycans are attached at residues Asn-534, Asn-542, and Asn-558. A disulfide bridge links Cys-566 with Cys-571. A glycan (N-linked (GlcNAc...) (high mannose) asparagine; by host) is linked at Asn-578. Intrachain disulfides connect Cys-585–Cys-589, Cys-601–Cys-624, and Cys-611–Cys-648. N-linked (GlcNAc...) (high mannose) asparagine; by host glycans are attached at residues Asn-627 and Asn-649. A disulfide bridge links Cys-656 with Cys-681. Residues 664–675 (SQLSPLLHSTTE) are EIF2AK2/eIF2-alpha phosphorylation homology domain (PePHD). The chain crosses the membrane as a helical span at residues 730–750 (LADARVCACLWMLILLGQAEA). Over 751–761 (ALEKLVVLHAA) the chain is Lumenal. Residues 762–782 (SAANCHGLLYFAIFFVAAWHI) form a helical membrane-spanning segment. Residues 783–785 (RGR) are Cytoplasmic-facing. The chain crosses the membrane as a helical span at residues 786 to 807 (VVPLTTYCLTGLWPFCLLLMAL). The Lumenal segment spans residues 808-817 (PRQAYAYDAP). Residues 818–838 (VHGQIGVGLLILITLFTLTPG) form a helical membrane-spanning segment. The Cytoplasmic segment spans residues 839-842 (YKTL). A helical transmembrane segment spans residues 843–863 (LGQCLWWLCYLLTLGEAMIQE). The Lumenal segment spans residues 864–885 (WVPPMQVRGGRDGIAWAVTIFC). The helical transmembrane segment at 886-906 (PGVVFDITKWLLALLGPAYLL) threads the bilayer. Positions 907 to 1030 (RAALTHVPYF…GYTSKGWKLL (124 aa)) constitute a Peptidase C18 domain. Residues 907–1661 (RAALTHVPYF…CMQADLEVMT (755 aa)) lie on the Cytoplasmic side of the membrane. Residues 908 to 1210 (AALTHVPYFV…PVETLDVVTR (303 aa)) are protease NS2-3. Cys-926 carries S-palmitoyl cysteine; by host lipidation. Positions 933 to 953 (AGGRYVQVALLALGRWTGTYI) are interaction with human SCPS1. Active-site for protease NS2 activity; shared with dimeric partner residues include His-956, Glu-976, and Cys-997. In terms of domain architecture, Peptidase S29 spans 1031 to 1212 (APITAYAQQT…ETLDVVTRSP (182 aa)). Residues His-1087 and Asp-1111 each act as charge relay system; for serine protease NS3 activity in the active site. 2 residues coordinate Zn(2+): Cys-1127 and Cys-1129. The active-site Charge relay system; for serine protease NS3 activity is Ser-1169. Zn(2+)-binding residues include Cys-1175 and His-1179. Residues 1221–1373 (PAVPQTYQVG…PDIEEVGLGR (153 aa)) form the Helicase ATP-binding domain. 1234-1241 (APTGSGKS) contacts ATP. Ser-1241 and Glu-1321 together coordinate Mg(2+). The DECH box signature appears at 1320-1323 (DECH). A disordered region spans residues 1481–1501 (VPQDAVSRSQRRGRTGRGRQG). The segment at 1490-1501 (QRRGRTGRGRQG) is RNA-binding. A helical transmembrane segment spans residues 1662–1682 (STWVLAGGVLAAVAAYCLATG). Residues 1683 to 1694 (CVSIIGRLHVNQ) are NS3-binding. Residues 1683–1809 (CVSIIGRLHV…ALTSPLSTST (127 aa)) are Cytoplasmic-facing. The chain crosses the membrane as a helical span at residues 1810–1830 (TILLNIMGGWLASQIAPPAGA). The Lumenal segment spans residues 1831–1832 (TG). A helical membrane pass occupies residues 1833–1853 (FVVSGLVGAAVGSIGLGKVLV). The glycine zipper stretch occupies residues 1837 to 1865 (GLVGAAVGSIGLGKVLVDILAGYGAGISG). Asp-1854 is a topological domain (cytoplasmic). Residues 1855–1875 (ILAGYGAGISGALVAFKIMSG) traverse the membrane as a helical segment. The Lumenal portion of the chain corresponds to 1876–1885 (EKPSMEDVIN). Residues 1886–1906 (LLPGILSPGALVVGVICAAIL) form a helical membrane-spanning segment. The Cytoplasmic portion of the chain corresponds to 1907 to 1976 (RRHVGPGEGA…WITEDCPIPC (70 aa)). A lipid anchor (S-palmitoyl cysteine; by host) is attached at Cys-1972. A lipid anchor (S-palmitoyl cysteine; by host; partial) is attached at Cys-1976. Residues 1977–2007 (SGSWLRDVWDWVCTILTDFKNWLTSKLFPKL) lie within the membrane without spanning it. Residues 1982–2002 (RDVWDWVCTILTDFKNWLTSK) are membrane-binding. Residues 2008–3012 (PGLPFISCQK…FHSVSRARPR (1005 aa)) are Cytoplasmic-facing. The interval 2009 to 2225 (GLPFISCQKG…RATCTTHSNT (217 aa)) is D1; RNA-binding. Cys-2015, Cys-2033, Cys-2035, and Cys-2056 together coordinate Zn(2+). A Phosphotyrosine; by host modification is found at Tyr-2069. Residues 2124–2212 (EFFSWVDGVQ…ASSSVSQLSA (89 aa)) are FKBP8-binding. The interval 2124–2332 (EFFSWVDGVQ…PTPPPRRRRT (209 aa)) is transcriptional activation. The interaction with non-structural protein 4A stretch occupies residues 2139–2143 (PTPKP). Positions 2192–2213 (RRLARGSPPSEASSSVSQLSAP) are disordered. The segment covering 2196–2213 (RGSPPSEASSSVSQLSAP) has biased composition (low complexity). Phosphoserine; by host; in p56 is present on Ser-2198. The residue at position 2201 (Ser-2201) is a Phosphoserine; by host; in p58. Phosphoserine; by host; in p56 and p58, regulates intracellular NS5A distribution is present on Ser-2205. 3 positions are modified to phosphoserine; by host; in p58: Ser-2208, Ser-2211, and Ser-2214. The tract at residues 2210–2249 (LSAPSLRATCTTHSNTYDVDMVDANLLMEGGVAQTEPESR) is ISDR. Residues 2214–2275 (SLRATCTTHS…LEPSIPSECM (62 aa)) are interaction with EIF2AK2/PKR. Residues 2227-2315 (DVDMVDANLL…YQPPTVAGCA (89 aa)) form a D2 region. The interval 2228–2315 (VDMVDANLLM…YQPPTVAGCA (88 aa)) is disordered. Residues 2249–2306 (RVPVLDFLEPMAEEESDLEPSIPSECMLPRSGFPRALPAWARPDYNPPLVESWRRPDY) are NS4B-binding. An interaction with human PPIA/CYPA region spans residues 2281 to 2297 (FPRALPAWARPDYNPPL). Positions 2316–2326 (LPPPKKAPTPP) are enriched in pro residues. The SH3-binding signature appears at 2322 to 2325 (APTP). At Thr-2324 the chain carries Phosphothreonine; by host. The short motif at 2326 to 2334 (PPRRRRTVG) is the Nuclear localization signal element. The segment at 2329–2442 (RRRTVGLSES…SEEDDTTVCC (114 aa)) is D3. The interaction with host IFI27 stretch occupies residues 2336-2447 (SESTISEALQ…TTVCCSMSYS (112 aa)). Residue Lys-2350 forms a Glycyl lysine isopeptide (Lys-Gly) (interchain with G-Cter in ubiquitin) linkage. Residues 2352–2432 (FGQPPSSGDA…GSGSGSWSTC (81 aa)) form a disordered region. The segment covering 2355 to 2379 (PPSSGDAGSSTGAGAAESGGPTSPG) has biased composition (low complexity). The interval 2358–2381 (SGDAGSSTGAGAAESGGPTSPGEP) is V3. The segment at 2371-2439 (ESGGPTSPGE…STCSEEDDTT (69 aa)) is interaction with host VAPB. The span at 2398-2408 (EPGDPDLESDQ) shows a compositional bias: acidic residues. Gly residues predominate over residues 2417–2426 (GGGVAPGSGS). One can recognise a RdRp catalytic domain in the interval 2656 to 2774 (PMGFSYDTRC…ISESQGTEED (119 aa)). Positions 2662, 2760, and 2761 each coordinate Mg(2+). Residues 3013 to 3033 (SLLFGLLLLFVGVGLFLLPAR) traverse the membrane as a helical segment.

The protein belongs to the hepacivirus polyprotein family. As to quaternary structure, homooligomer. Interacts with E1 (via C-terminus). Interacts with the non-structural protein 5A. Interacts (via N-terminus) with host STAT1 (via SH2 domain); this interaction results in decreased STAT1 phosphorylation and ubiquitin-mediated proteasome-dependent STAT1 degradation, leading to decreased IFN-stimulated gene transcription. Interacts with host STAT3; this interaction constitutively activates STAT3. Interacts with host LTBR receptor. Interacts with host TNFRSF1A receptor and possibly induces apoptosis. Interacts with host HNRPK. Interacts with host YWHAE. Interacts with host UBE3A/E6AP. Interacts with host DDX3X. Interacts with host APOA2. Interacts with host RXRA protein. Interacts with host SP110 isoform 3/Sp110b; this interaction sequesters the transcriptional corepressor SP110 away from the nucleus. Interacts with host CREB3 nuclear transcription protein; this interaction triggers cell transformation. Interacts with host ACY3. Interacts with host C1QR1. Interacts with host RBM24; this interaction, which enhances the interaction of the mature core protein with 5'-UTR, may inhibit viral translation and favor replication. Interacts (via N-terminus) with host EIF2AK2/PKR (via N-terminus); this interaction induces the autophosphorylation of EIF2AK2. Part of the viral assembly initiation complex composed of NS2, E1, E2, NS3, NS4A, NS5A and the mature core protein. In terms of assembly, forms a heterodimer with envelope glycoprotein E2. Interacts with mature core protein. Interacts with protease NS2. The heterodimer E1/E2 interacts with host CLDN1; this interaction plays a role in viral entry into host cell. Interacts with host SPSB2 (via C-terminus). Part of the viral assembly initiation complex composed of NS2, E1, E2, NS3, NS4A, NS5A and the mature core protein. Forms a heterodimer with envelope glycoprotein E1. Interacts with host CD81 and SCARB1 receptors; these interactions play a role in viral entry into host cell. Interacts with host EIF2AK2/PKR; this interaction inhibits EIF2AK2 and probably allows the virus to evade the innate immune response. Interacts with host CD209/DC-SIGN and CLEC4M/DC-SIGNR. Interact with host SPCS1; this interaction is essential for viral particle assembly. Interacts with protease NS2. The heterodimer E1/E2 interacts with host CLDN1; this interaction plays a role in viral entry into host cell. Part of the viral assembly initiation complex composed of NS2, E1, E2, NS3, NS4A, NS5A and the mature core protein. Interacts with host SLC3A2/4F2hc; the interaction may facilitate viral entry into host cell. As to quaternary structure, homohexamer. Homoheptamer. Interacts with protease NS2. In terms of assembly, homodimer. Interacts with host SPCS1; this interaction is essential for viral particle assembly. Interacts with envelope glycoprotein E1. Interacts with envelope glycoprotein E2. Interacts with viroporin p7. Interacts with serine protease/helicase NS3. Part of the replication complex composed of NS2, NS3, NS4A, NS4B, NS5A and the RNA-directed RNA polymerase embedded in an ER-derived membranous web. Part of the viral assembly initiation complex composed of NS2, E1, E2, NS3, NS4A, NS5A and the mature core protein. Interacts with host NEURL3; this interaction prevents E1 binding to glycoprotein E2. Interacts with protease NS2. Interacts with non-structural protein 4A; this interaction stabilizes the folding of NS3 serine protease. NS3-NS4A interaction is essential for NS3 activation and allows membrane anchorage of the latter. NS3/NS4A complex also prevents phosphorylation of host IRF3, thus preventing the establishment of dsRNA induced antiviral state. Interacts with host MAVS; this interaction leads to the cleavage and inhibition of host MAVS. Interacts with host TICAM1; this interaction leads to the cleavage and inhibition of host TICAM1. Interacts with host TANK-binding kinase/TBK1; this interaction results in the inhibition of the association between TBK1 and IRF3, which leads to the inhibition of IRF3 activation. Interacts with host RBM24. Part of the replication complex composed of NS2, NS3, NS4A, NS4B, NS5A and the RNA-directed RNA polymerase embedded in an ER-derived membranous web. Part of the viral assembly initiation complex composed of NS2, E1, E2, NS3, NS4A, NS5A and the mature core protein. As to quaternary structure, interacts with NS3 serine protease; this interaction stabilizes the folding of NS3 serine protease. NS3-NS4A interaction is essential for NS3 activation and allows membrane anchorage of the latter. Interacts with non-structural protein 5A (via N-terminus). Part of the replication complex composed of NS2, NS3, NS4A, NS4B, NS5A and the RNA-directed RNA polymerase embedded in an ER-derived membranous web. Part of the viral assembly initiation complex composed of NS2, E1, E2, NS3, NS4A, NS5A and the mature core protein. In terms of assembly, homomultimer. Interacts with non-structural protein NS5A. Interacts with host PLA2G4C; this interaction likely initiates the recruitment of replication complexes to lipid droplets. Interacts with host STING; this interaction disrupts the interaction between STING and TBK1 thereby suppressing the interferon signaling. Part of the replication complex composed of NS2, NS3, NS4A, NS4B, NS5A and the RNA-directed RNA polymerase embedded in an ER-derived membranous web. Monomer. Homodimer; dimerization is required for RNA-binding. Interacts with the mature core protein. Interacts (via N-terminus) with non-structural protein 4A. Interacts with non-structural protein 4B. Interacts (via region D2) with RNA-directed RNA polymerase. Part of the viral assembly initiation complex composed of NS2, E1, E2, NS3, NS4A, NS5A and the mature core protein. Part of the replication complex composed of NS2, NS3, NS4A, NS4B, NS5A and the RNA-directed RNA polymerase embedded in an ER-derived membranous web. Interacts with host GRB2. Interacts with host BIN1. Interacts with host PIK3R1. Interacts with host SRCAP. Interacts with host FKBP8. Interacts (via C-terminus) with host VAPB (via MSP domain). Interacts with host EIF2AK2/PKR; this interaction leads to disruption of EIF2AK2 dimerization by NS5A and probably allows the virus to evade the innate immune response. Interacts (via N-terminus) with host PACSIN2 (via N-terminus); this interaction attenuates protein kinase C alpha-mediated phosphorylation of PACSIN2 by disrupting the interaction between PACSIN2 and PRKCA. Interacts (via N-terminus) with host SRC kinase (via SH2 domain). Interacts with most Src-family kinases. Interacts with host IFI27 and SKP2; promotes the ubiquitin-mediated proteasomal degradation of NS5A. Interacts with host GPS2. Interacts with host TNFRSF21; this interaction allows the modulation by the virus of JNK, p38 MAPK, STAT3, and Akt signaling pathways in a DR6-dependent manner. Interacts (via N-terminus) with host CIDEB (via N-terminus); this interaction seems to regulate the association of HCV particles with APOE. Interacts with host CHKA/Choline Kinase-alpha; CHKA bridges host PI4KA and NS5A and potentiates NS5A-stimulated PI4KA activity, which then facilitates the targeting of the ternary complex to the ER for viral replication. Interacts with host SPSB2 (via C-terminus); this interaction targets NS5A for ubiquitination and degradation. Interacts with host RAB18; this interaction may promote the association of NS5A and other replicase components with lipid droplets. Interacts (via region D2) with host PPIA/CYPA; the interaction stimulates RNA-binding ability of NS5A and is dependent on the peptidyl-prolyl cis-trans isomerase activity of PPIA/CYPA. Interacts with host TRIM14; this interaction induces the degradation of NS5A. As to quaternary structure, homooligomer. Interacts with non-structural protein 5A. Interacts with host VAPB. Interacts with host PRK2/PKN2. Interacts with host HNRNPA1 and SEPT6; these interactions facilitate the viral replication. Part of the replication complex composed of NS2, NS3, NS4A, NS4B, NS5A and the RNA-directed RNA polymerase embedded in an ER-derived membranous web. It depends on Zn(2+) as a cofactor. The cofactor is Mg(2+). Specific enzymatic cleavages in vivo yield mature proteins. The structural proteins, core, E1, E2 and p7 are produced by proteolytic processing by host signal peptidases. The core protein is synthesized as a 23 kDa precursor which is retained in the ER membrane through the hydrophobic signal peptide. Cleavage by the signal peptidase releases the 21 kDa mature core protein. The cleavage of the core protein precursor occurs between aminoacids 176 and 188 but the exact cleavage site is not known. Some degraded forms of the core protein appear as well during the course of infection. The other proteins (p7, NS2, NS3, NS4A, NS4B, NS5A and NS5B) are cleaved by the viral proteases. Autoprocessing between NS2 and NS3 is mediated by the NS2 cysteine protease catalytic domain and regulated by the NS3 N-terminal domain. Post-translationally, phosphorylated by host PKC and PKA. In terms of processing, ubiquitinated; mediated by UBE3A and leading to core protein subsequent proteasomal degradation. Highly N-glycosylated. Post-translationally, palmitoylation is required for NS2/3 autoprocessing and E2 recruitment to membranes. In terms of processing, palmitoylated. This modification may play a role in its polymerization or in protein-protein interactions. Cleaved by host caspases which arec probably activated by the viral infection. Post-translationally, ubiquitinated. Ubiquitination, most probably at Lys-2350, mediated by host IFI27 and SKP2 leads to proteasomal degradation, restricting viral infection. In terms of processing, phosphorylated on serines in a basal form termed p56. p58 is a hyperphosphorylated form of p56. p56 and p58 coexist in the cell in roughly equivalent amounts. Hyperphosphorylation is dependent on the presence of NS4A. Host CSNK1A1/CKI-alpha, PI4KA or RPS6KB1 kinases may be responsible for NS5A phosphorylation. Phosphorylated NS5A is involved in viral replication. Tyrosine phosphorylation is essential for the interaction with host SRC. Post-translationally, the N-terminus is phosphorylated by host PRK2/PKN2.

Its subcellular location is the host endoplasmic reticulum membrane. The protein resides in the host mitochondrion membrane. It localises to the virion. It is found in the host cytoplasm. The protein localises to the host nucleus. Its subcellular location is the host lipid droplet. The protein resides in the virion membrane. It localises to the host mitochondrion. It is found in the host cell membrane. The protein localises to the host perinuclear region. The enzyme catalyses Hydrolysis of four peptide bonds in the viral precursor polyprotein, commonly with Asp or Glu in the P6 position, Cys or Thr in P1 and Ser or Ala in P1'.. It catalyses the reaction a ribonucleoside 5'-triphosphate + H2O = a ribonucleoside 5'-diphosphate + phosphate + H(+). It carries out the reaction ATP + H2O = ADP + phosphate + H(+). The catalysed reaction is RNA(n) + a ribonucleoside 5'-triphosphate = RNA(n+1) + diphosphate. Its activity is regulated as follows. Inhibited by the antiviral drug hexamethylene amiloride. Inhibition by amantadine appears to be genotype-dependent. Also inhibited by long-alkyl-chain iminosugar derivatives. Activity is up-regulated by PRK2/PKN2-mediated phosphorylation. Its function is as follows. Packages viral RNA to form a viral nucleocapsid, and promotes virion budding. Participates in the viral particle production as a result of its interaction with the non-structural protein 5A. Binds RNA and may function as a RNA chaperone to induce the RNA structural rearrangements taking place during virus replication. Modulates viral translation initiation by interacting with viral IRES and 40S ribosomal subunit. Affects various cell signaling pathways, host immunity and lipid metabolism. Prevents the establishment of cellular antiviral state by blocking the interferon-alpha/beta (IFN-alpha/beta) and IFN-gamma signaling pathways and by blocking the formation of phosphorylated STAT1 and promoting ubiquitin-mediated proteasome-dependent degradation of STAT1. Activates STAT3 leading to cellular transformation. Regulates the activity of cellular genes, including c-myc and c-fos. May repress the promoter of p53, and sequester CREB3 and SP110 isoform 3/Sp110b in the cytoplasm. Represses cell cycle negative regulating factor CDKN1A, thereby interrupting an important check point of normal cell cycle regulation. Targets transcription factors involved in the regulation of inflammatory responses and in the immune response: suppresses NF-kappa-B activation, and activates AP-1. Binds to dendritic cells (DCs) via C1QR1, resulting in down-regulation of T-lymphocytes proliferation. Alters lipid metabolism by interacting with hepatocellular proteins involved in lipid accumulation and storage. Induces up-regulation of FAS promoter activity, and thereby contributes to the increased triglyceride accumulation in hepatocytes (steatosis). Forms a heterodimer with envelope glycoprotein E2, which mediates virus attachment to the host cell, virion internalization through clathrin-dependent endocytosis and fusion with host membrane. Fusion with the host cell is most likely mediated by both E1 and E2, through conformational rearrangements of the heterodimer required for fusion rather than a classical class II fusion mechanism. E1/E2 heterodimer binds host apolipoproteins such as APOB and APOE thereby forming a lipo-viro-particle (LVP). APOE associated to the LVP allows the initial virus attachment to cell surface receptors such as the heparan sulfate proteoglycans (HSPGs), syndecan-1 (SDC1), syndecan-1 (SDC2), the low-density lipoprotein receptor (LDLR) and scavenger receptor class B type I (SCARB1). The cholesterol transfer activity of SCARB1 allows E2 exposure and binding of E2 to SCARB1 and the tetraspanin CD81. E1/E2 heterodimer binding on CD81 activates the epithelial growth factor receptor (EGFR) signaling pathway. Diffusion of the complex E1-E2-EGFR-SCARB1-CD81 to the cell lateral membrane allows further interaction with Claudin 1 (CLDN1) and occludin (OCLN) to finally trigger HCV entry. In terms of biological role, forms a heterodimer with envelope glycoprotein E1, which mediates virus attachment to the host cell, virion internalization through clathrin-dependent endocytosis and fusion with host membrane. Fusion with the host cell is most likely mediated by both E1 and E2, through conformational rearrangements of the heterodimer required for fusion rather than a classical class II fusion mechanism. The interaction between envelope glycoprotein E2 and host apolipoprotein E/APOE allows the proper assembly, maturation and infectivity of the viral particles. This interaction is probably promoted via the up-regulation of cellular autophagy by the virus. E1/E2 heterodimer binds host apolipoproteins such as APOB and APOE thereby forming a lipo-viro-particle (LVP). APOE associated to the LVP allows the initial virus attachment to cell surface receptors such as the heparan sulfate proteoglycans (HSPGs), syndecan-1 (SDC1), syndecan-1 (SDC2), the low-density lipoprotein receptor (LDLR) and scavenger receptor class B type I (SCARB1). The cholesterol transfer activity of SCARB1 allows E2 exposure and binding of E2 to SCARB1 and the tetraspanin CD81. E1/E2 heterodimer binding on CD81 activates the epithelial growth factor receptor (EGFR) signaling pathway. Diffusion of the complex E1-E2-EGFR-SCARB1-CD81 to the cell lateral membrane allows further interaction with Claudin 1 (CLDN1) and occludin (OCLN) to finally trigger HCV entry. Inhibits host EIF2AK2/PKR activation, preventing the establishment of an antiviral state. Viral ligand for CD209/DC-SIGN and CLEC4M/DC-SIGNR, which are respectively found on dendritic cells (DCs), and on liver sinusoidal endothelial cells and macrophage-like cells of lymph node sinuses. These interactions allow the capture of circulating HCV particles by these cells and subsequent facilitated transmission to permissive cells such as hepatocytes and lymphocyte subpopulations. The interaction between E2 and host amino acid transporter complex formed by SLC3A2 and SLC7A5/LAT1 may facilitate viral entry into host cell. Functionally, ion channel protein that acts as a viroporin and plays an essential role in the assembly, envelopment and secretion of viral particles. Regulates the host cell secretory pathway, which induces the intracellular retention of viral glycoproteins and favors assembly of viral particles. Creates a pore in acidic organelles and releases Ca(2+) and H(+) in the cytoplasm of infected cells, leading to a productive viral infection. High levels of cytoplasmic Ca(2+) may trigger membrane trafficking and transport of viral ER-associated proteins to viroplasms, sites of viral genome replication. This ionic imbalance induces the assembly of the inflammasome complex, which triggers the maturation of pro-IL-1beta into IL-1beta through the action of caspase-1. Targets also host mitochondria and induces mitochondrial depolarization. In addition of its role as a viroporin, acts as a lipid raft adhesion factor. Its function is as follows. Cysteine protease required for the proteolytic auto-cleavage between the non-structural proteins NS2 and NS3. The N-terminus of NS3 is required for the function of NS2 protease (active region NS2-3). Promotes the initiation of viral particle assembly by mediating the interaction between structural and non-structural proteins. Displays three enzymatic activities: serine protease with a chymotrypsin-like fold, NTPase and RNA helicase. NS3 serine protease, in association with NS4A, is responsible for the cleavages of NS3-NS4A, NS4A-NS4B, NS4B-NS5A and NS5A-NS5B. The NS3/NS4A complex prevents phosphorylation of host IRF3, thus preventing the establishment of dsRNA induced antiviral state. The NS3/NS4A complex induces host amino acid transporter component SLC3A2, thus contributing to HCV propagation. NS3 RNA helicase binds to RNA and unwinds both dsDNA and dsRNA in the 3' to 5' direction, and likely resolves RNA complicated stable secondary structures in the template strand. Binds a single ATP and catalyzes the unzipping of a single base pair of dsRNA. Inhibits host antiviral proteins TBK1 and IRF3 thereby preventing the establishment of an antiviral state. Cleaves host MAVS/CARDIF thereby preventing the establishment of an antiviral state. Cleaves host TICAM1/TRIF, thereby disrupting TLR3 signaling and preventing the establishment of an antiviral state. In terms of biological role, peptide cofactor which forms a non-covalent complex with the N-terminal of NS3 serine protease. The NS3/NS4A complex prevents phosphorylation of host IRF3, thus preventing the establishment of dsRNA induced antiviral state. The NS3/NS4A complex induces host amino acid transporter component SLC3A2, thus contributing to HCV propagation. Functionally, induces a specific membrane alteration that serves as a scaffold for the virus replication complex. This membrane alteration gives rise to the so-called ER-derived membranous web that contains the replication complex. NS4B self-interaction contributes to its function in membranous web formation. Promotes host TRIF protein degradation in a CASP8-dependent manner thereby inhibiting host TLR3-mediated interferon signaling. Disrupts the interaction between STING and TBK1 contributing to the inhibition of interferon signaling. Its function is as follows. Phosphorylated protein that is indispensable for viral replication and assembly. Both hypo- and hyperphosphorylated states are required for the viral life cycle. The hyperphosphorylated form of NS5A is an inhibitor of viral replication. Involved in RNA-binding and especially in binding to the viral genome. Zinc is essential for RNA-binding. Participates in the viral particle production as a result of its interaction with the viral mature core protein. Its interaction with host VAPB may target the viral replication complex to vesicles. Down-regulates viral IRES translation initiation. Mediates interferon resistance, presumably by interacting with and inhibiting host EIF2AK2/PKR. Prevents BIN1-induced apoptosis. Acts as a transcriptional activator of some host genes important for viral replication when localized in the nucleus. Via the interaction with host PACSIN2, modulates lipid droplet formation in order to promote virion assembly. Modulates TNFRSF21/DR6 signaling pathway for viral propagation. RNA-dependent RNA polymerase that performs primer-template recognition and RNA synthesis during viral replication. Initiates RNA transcription/replication at a flavin adenine dinucleotide (FAD), resulting in a 5'- FAD cap on viral RNAs. In this way, recognition of viral 5' RNA by host pattern recognition receptors can be bypassed, thereby evading activation of antiviral pathways. In Homo sapiens (Human), this protein is Genome polyprotein.